A 472-amino-acid polypeptide reads, in one-letter code: Serralysin A (472 aa).

Residues 1 to 17 (MEKNLSSRDDDALHSLS) constitute a propeptide that is removed on maturation. Position 186 (histidine 186) interacts with Zn(2+). Glutamate 187 is a catalytic residue. Positions 190 and 221 each coordinate Zn(2+). Residues arginine 258, glycine 260, threonine 262, aspartate 290, glycine 292, glycine 293, threonine 332, glutamate 334, glycine 339, glycine 341, aspartate 343, asparagine 348, alanine 350, asparagine 352, glycine 356, glycine 357, alanine 358, glycine 359, aspartate 361, glycine 365, glycine 366, glycine 367, glycine 368, aspartate 370, glycine 374, glycine 375, glycine 377, aspartate 379, aspartate 388, aspartate 395, and aspartate 405 each coordinate Ca(2+). Hemolysin-type calcium-binding repeat units lie at residues 337–354 (IGGS…DNIL) and 355–372 (RGGA…ADRL).

Belongs to the peptidase M10B family. Ca(2+) is required as a cofactor. Zn(2+) serves as cofactor.

It localises to the secreted. It catalyses the reaction Preferential cleavage of bonds with hydrophobic residues in P1'.. The protein is Serralysin A (prtA) of Dickeya chrysanthemi (Pectobacterium chrysanthemi).